Consider the following 287-residue polypeptide: Probable 3-hydroxybutyryl-CoA dehydrogenase (287 aa).

It belongs to the 3-hydroxyacyl-CoA dehydrogenase family.

The enzyme catalyses (3S)-3-hydroxybutanoyl-CoA + NADP(+) = acetoacetyl-CoA + NADPH + H(+). It functions in the pathway lipid metabolism; butanoate metabolism. The polypeptide is Probable 3-hydroxybutyryl-CoA dehydrogenase (mmgB) (Bacillus subtilis (strain 168)).